Here is a 227-residue protein sequence, read N- to C-terminus: Small ribosomal subunit protein uS3 (227 aa).

The region spanning 39–108 (IRKFIEERYK…EVIVNVDEVK (70 aa)) is the KH type-2 domain.

The protein belongs to the universal ribosomal protein uS3 family. In terms of assembly, part of the 30S ribosomal subunit. Forms a tight complex with proteins S10 and S14.

Its function is as follows. Binds the lower part of the 30S subunit head. Binds mRNA in the 70S ribosome, positioning it for translation. The sequence is that of Small ribosomal subunit protein uS3 from Sulfurihydrogenibium sp. (strain YO3AOP1).